We begin with the raw amino-acid sequence, 287 residues long: MRIIETHRDLLSRLLPGDTVGGLAVHEGQFHHVVIGSHRVVCFARTRAAADRLPGRADVLRALAGIDLGFRTPQPLSEGGAQGTDEPPYLVLSRIPGAPLEDDVLTSPEVAEAVARQYATLLSGLAAAGDEEKVRAALPEAPANEWQEFATGVRTELFPLMSDGGRERAERELAALDALPHLTSAVVHGDLGGENVLWETVDGVPRMSGVVDWDEVGIGDPAEDLAAIGASYGEELLGRVLALGGWADNGTAERISAIRGTFALQQALYAQRDGDEEELADGLSGYR.

The Proton acceptor role is filled by Asp-190.

The protein belongs to the aminoglycoside phosphotransferase family.

It catalyses the reaction viomycin + ATP = O-phosphoviomycin + ADP + H(+). Functionally, the aminoglycoside phosphotransferases achieve inactivation of their antibiotic substrates by phosphorylation. In Streptomyces vinaceus, this protein is Viomycin phosphotransferase (vph).